Consider the following 233-residue polypeptide: 2,3,4,5-tetrahydropyridine-2,6-dicarboxylate N-acetyltransferase (233 aa).

This sequence belongs to the transferase hexapeptide repeat family. DapH subfamily.

It carries out the reaction (S)-2,3,4,5-tetrahydrodipicolinate + acetyl-CoA + H2O = L-2-acetamido-6-oxoheptanedioate + CoA. It participates in amino-acid biosynthesis; L-lysine biosynthesis via DAP pathway; LL-2,6-diaminopimelate from (S)-tetrahydrodipicolinate (acetylase route): step 1/3. In terms of biological role, catalyzes the transfer of an acetyl group from acetyl-CoA to tetrahydrodipicolinate. This chain is 2,3,4,5-tetrahydropyridine-2,6-dicarboxylate N-acetyltransferase, found in Thermosipho africanus (strain TCF52B).